The following is a 915-amino-acid chain: Protein translocase subunit SecA (915 aa).

ATP-binding positions include Gln-87, 105-109 (GEGKT), and Asp-512. The tract at residues 881–915 (LPGTAPVRPEPKIGRNEPCPCGSGKKYKHCHGQLN) is disordered. 4 residues coordinate Zn(2+): Cys-899, Cys-901, Cys-910, and His-911. Over residues 905 to 915 (KKYKHCHGQLN) the composition is skewed to basic residues.

The protein belongs to the SecA family. In terms of assembly, monomer and homodimer. Part of the essential Sec protein translocation apparatus which comprises SecA, SecYEG and auxiliary proteins SecDF-YajC and YidC. Requires Zn(2+) as cofactor.

It localises to the cell inner membrane. It is found in the cytoplasm. It catalyses the reaction ATP + H2O + cellular proteinSide 1 = ADP + phosphate + cellular proteinSide 2.. In terms of biological role, part of the Sec protein translocase complex. Interacts with the SecYEG preprotein conducting channel. Has a central role in coupling the hydrolysis of ATP to the transfer of proteins into and across the cell membrane, serving both as a receptor for the preprotein-SecB complex and as an ATP-driven molecular motor driving the stepwise translocation of polypeptide chains across the membrane. The protein is Protein translocase subunit SecA of Azotobacter vinelandii (strain DJ / ATCC BAA-1303).